The sequence spans 397 residues: ATP-dependent RNA helicase eIF4A (397 aa).

A Q motif motif is present at residues tyrosine 23–glutamine 51. The 171-residue stretch at isoleucine 54–isoleucine 224 folds into the Helicase ATP-binding domain. Alanine 67–threonine 74 contacts ATP. Positions aspartate 172–aspartate 175 match the DEAD box motif. Positions glycine 235 to phenylalanine 396 constitute a Helicase C-terminal domain.

It belongs to the DEAD box helicase family. eIF4A subfamily. As to quaternary structure, component of the eIF4F complex, which composition varies with external and internal environmental conditions. It is composed of at least eIF4A, eIF4E and eIF4G.

The protein resides in the cytoplasm. It catalyses the reaction ATP + H2O = ADP + phosphate + H(+). Its function is as follows. ATP-dependent RNA helicase which is a subunit of the eIF4F complex involved in cap recognition and is required for mRNA binding to ribosome. In the current model of translation initiation, eIF4A unwinds RNA secondary structures in the 5'-UTR of mRNAs which is necessary to allow efficient binding of the small ribosomal subunit, and subsequent scanning for the initiator codon. This Debaryomyces hansenii (strain ATCC 36239 / CBS 767 / BCRC 21394 / JCM 1990 / NBRC 0083 / IGC 2968) (Yeast) protein is ATP-dependent RNA helicase eIF4A (TIF1).